A 653-amino-acid chain; its full sequence is Large subunit GTPase 1 homolog (653 aa).

The tract at residues 1-31 (MGRRRAPAGGSLGRALMRHQTQRSRSHRHTD) is disordered. The span at 16 to 28 (LMRHQTQRSRSHR) shows a compositional bias: basic residues. Residues S93 and S97 each carry the phosphoserine modification. One can recognise a CP-type G domain in the interval 164-445 (WRQLWRVIER…LCDCPGLVMP (282 aa)). 212–215 (NKAD) is a GTP binding site. The tract at residues 251-358 (DSEEEANKDD…RKTPQKRQLH (108 aa)) is disordered. Residue S252 is modified to Phosphoserine. A compositionally biased stretch (basic and acidic residues) spans 258-288 (KDDRQSNTAEFEHSSFDEAEISHSETEHLPA). Residues 299-333 (TTDEDDSEYEDCPEEEEDDWQTCSEEDGPEEEDCG) are compositionally biased toward acidic residues. Residues 394 to 401 (GYPNVGKS) and 438 to 441 (DCPG) each bind GTP. The disordered stretch occupies residues 630–653 (SENGAGKPWKKHGNRNKKEKSCRL). Residues 637-647 (PWKKHGNRNKK) are compositionally biased toward basic residues.

It belongs to the TRAFAC class YlqF/YawG GTPase family. LSG1 subfamily.

It is found in the cytoplasm. The protein resides in the endoplasmic reticulum. The protein localises to the nucleus. Its subcellular location is the cajal body. The enzyme catalyses GTP + H2O = GDP + phosphate + H(+). Functions as a GTPase. May act by mediating the release of NMD3 from the 60S ribosomal subunit after export into the cytoplasm during the 60S ribosomal subunit maturation. This chain is Large subunit GTPase 1 homolog, found in Macaca fascicularis (Crab-eating macaque).